The sequence spans 515 residues: Brahma-associated protein of 60 kDa (515 aa).

A disordered region spans residues 1–124 (MSQRFAPGQA…GGSKSDFATA (124 aa)). A compositionally biased stretch (pro residues) spans 17–34 (QPPPPAPGMRPYPPPGAS). The segment covering 49–62 (PVPGTANVAGVPGV) has biased composition (low complexity). The segment covering 90–103 (TGAGGGGVGSGGGS) has biased composition (gly residues). The segment at 116-204 (GSKSDFATAK…SKEPTNDGEE (89 aa)) is DNA-binding. The 78-residue stretch at 291-368 (YQPLQFKLDP…PQRLNPLLHP (78 aa)) folds into the SWIB/MDM2 domain.

In terms of assembly, there are 2 distinct Brahma complexes in the fruit fly, the Brahma-associated proteins (BAP) and Polybromo-containing BAP (PBAP) complexes, which are composed of common subunits Brm, Mor, Snr1/Bap45, Bap111/Dalo, Bap55, Bap60 and Act42A/Bap47, and additional signature subunits osa in the BAP complex and Polybromo and Bap170 in the PBAP complex. Interacts with sisA and sc. Interacts with mor. Interacts with p53. Interacts with erm (via N-terminal). Interacts with akirin; interaction is immune stimulation-dependent; activates selected Rel target gene promoters.

Its function is as follows. Involved in the recruitment and site-specific anchoring of the Brahma complex at specific promoter sites. The Brahma complex is a multiprotein complex which is the equivalent of the yeast SWI/SNF complex and acts by remodeling the chromatin by catalyzing an ATP-dependent alteration in the structure of nucleosomal DNA. This complex can both serve as a transcriptional coactivator or corepressor, depending on the context. Participates in X-chromosomal dosage compensation. Participates in neurogenesis. The sequence is that of Brahma-associated protein of 60 kDa (Bap60) from Drosophila melanogaster (Fruit fly).